The sequence spans 160 residues: Transcriptional repressor NrdR (160 aa).

The segment at 3 to 34 is a zinc-finger region; that stretch reads CPYCQYEDTQVKDSRPAEEGAVIRRRRVCSVC. The ATP-cone domain occupies 49-139; that stretch reads LLITKKNGRC…VYRDFRNASD (91 aa).

The protein belongs to the NrdR family. Requires Zn(2+) as cofactor.

In terms of biological role, negatively regulates transcription of bacterial ribonucleotide reductase nrd genes and operons by binding to NrdR-boxes. The sequence is that of Transcriptional repressor NrdR from Bartonella tribocorum (strain CIP 105476 / IBS 506).